Here is a 191-residue protein sequence, read N- to C-terminus: Recombination protein RecR (191 aa).

The C4-type zinc-finger motif lies at Cys-56 to Cys-71. The Toprim domain occupies Lys-78 to Pro-170.

This sequence belongs to the RecR family.

In terms of biological role, may play a role in DNA repair. It seems to be involved in an RecBC-independent recombinational process of DNA repair. It may act with RecF and RecO. The chain is Recombination protein RecR from Mycoplasmopsis pulmonis (strain UAB CTIP) (Mycoplasma pulmonis).